A 469-amino-acid chain; its full sequence is C4b-binding protein (469 aa).

A signal peptide spans 1–56 (MCAKQQQTLLPTRAAHGRLHRNRDAVAWPFSTLCRVSGPTLFQMTFTAALWVAVFG). Sushi domains are found at residues 57 to 117 (KCGP…SCAK), 118 to 178 (KHCR…ECVI), 179 to 242 (VKCG…TCEK), 243 to 301 (IICS…TCEF), 302 to 357 (DCDL…QCKA), and 358 to 415 (LCQK…RCEQ). 12 disulfide bridges follow: C58–C103, C88–C115, C120–C160, C146–C176, C181–C223, C209–C240, C245–C287, C273–C299, C303–C343, C329–C355, C359–C400, and C386–C413. N-linked (GlcNAc...) asparagine glycosylation occurs at N74. Residues N227, N275, and N292 are each glycosylated (N-linked (GlcNAc...) asparagine). N-linked (GlcNAc...) asparagine glycans are attached at residues N366 and N381. N428 is a glycosylation site (N-linked (GlcNAc...) asparagine).

In terms of assembly, homoheptamer; not covalently linked. Mouse lacks the beta chain of C4BP.

It localises to the secreted. Functionally, controls the classical pathway of complement activation. It binds as a cofactor to C3b/C4b inactivator (C3bINA), which then hydrolyzes the complement fragment C4b. It also accelerates the degradation of the C4bC2a complex (C3 convertase) by dissociating the complement fragment C2a. Alpha chain binds C4b. It also interacts with serum amyloid P component. This is C4b-binding protein (C4bpa) from Mus musculus (Mouse).